Here is a 328-residue protein sequence, read N- to C-terminus: 4-hydroxythreonine-4-phosphate dehydrogenase (328 aa).

Substrate-binding residues include histidine 134 and threonine 135. A divalent metal cation-binding residues include histidine 164, histidine 209, and histidine 265. Substrate-binding residues include lysine 273, asparagine 282, and arginine 291.

This sequence belongs to the PdxA family. As to quaternary structure, homodimer. Zn(2+) is required as a cofactor. It depends on Mg(2+) as a cofactor. Co(2+) serves as cofactor.

It localises to the cytoplasm. The catalysed reaction is 4-(phosphooxy)-L-threonine + NAD(+) = 3-amino-2-oxopropyl phosphate + CO2 + NADH. It participates in cofactor biosynthesis; pyridoxine 5'-phosphate biosynthesis; pyridoxine 5'-phosphate from D-erythrose 4-phosphate: step 4/5. Catalyzes the NAD(P)-dependent oxidation of 4-(phosphooxy)-L-threonine (HTP) into 2-amino-3-oxo-4-(phosphooxy)butyric acid which spontaneously decarboxylates to form 3-amino-2-oxopropyl phosphate (AHAP). The polypeptide is 4-hydroxythreonine-4-phosphate dehydrogenase (Vibrio vulnificus (strain CMCP6)).